Reading from the N-terminus, the 255-residue chain is Indole-3-glycerol phosphate synthase (255 aa).

The protein belongs to the TrpC family.

The catalysed reaction is 1-(2-carboxyphenylamino)-1-deoxy-D-ribulose 5-phosphate + H(+) = (1S,2R)-1-C-(indol-3-yl)glycerol 3-phosphate + CO2 + H2O. Its pathway is amino-acid biosynthesis; L-tryptophan biosynthesis; L-tryptophan from chorismate: step 4/5. This is Indole-3-glycerol phosphate synthase from Streptococcus gordonii (strain Challis / ATCC 35105 / BCRC 15272 / CH1 / DL1 / V288).